The following is a 529-amino-acid chain: Bifunctional purine biosynthesis protein PurH (529 aa).

Residues 2-149 (TNLVPVGRAL…KNHRFVNVVT (148 aa)) form the MGS-like domain.

The protein belongs to the PurH family.

The enzyme catalyses (6R)-10-formyltetrahydrofolate + 5-amino-1-(5-phospho-beta-D-ribosyl)imidazole-4-carboxamide = 5-formamido-1-(5-phospho-D-ribosyl)imidazole-4-carboxamide + (6S)-5,6,7,8-tetrahydrofolate. The catalysed reaction is IMP + H2O = 5-formamido-1-(5-phospho-D-ribosyl)imidazole-4-carboxamide. The protein operates within purine metabolism; IMP biosynthesis via de novo pathway; 5-formamido-1-(5-phospho-D-ribosyl)imidazole-4-carboxamide from 5-amino-1-(5-phospho-D-ribosyl)imidazole-4-carboxamide (10-formyl THF route): step 1/1. Its pathway is purine metabolism; IMP biosynthesis via de novo pathway; IMP from 5-formamido-1-(5-phospho-D-ribosyl)imidazole-4-carboxamide: step 1/1. The chain is Bifunctional purine biosynthesis protein PurH from Cereibacter sphaeroides (strain ATCC 17029 / ATH 2.4.9) (Rhodobacter sphaeroides).